Consider the following 416-residue polypeptide: Serine hydroxymethyltransferase (416 aa).

(6S)-5,6,7,8-tetrahydrofolate contacts are provided by residues L121 and 125–127 (GHL). The residue at position 229 (K229) is an N6-(pyridoxal phosphate)lysine.

It belongs to the SHMT family. Homodimer. Pyridoxal 5'-phosphate is required as a cofactor.

The protein localises to the cytoplasm. It catalyses the reaction (6R)-5,10-methylene-5,6,7,8-tetrahydrofolate + glycine + H2O = (6S)-5,6,7,8-tetrahydrofolate + L-serine. It participates in one-carbon metabolism; tetrahydrofolate interconversion. It functions in the pathway amino-acid biosynthesis; glycine biosynthesis; glycine from L-serine: step 1/1. Its function is as follows. Catalyzes the reversible interconversion of serine and glycine with tetrahydrofolate (THF) serving as the one-carbon carrier. This reaction serves as the major source of one-carbon groups required for the biosynthesis of purines, thymidylate, methionine, and other important biomolecules. Also exhibits THF-independent aldolase activity toward beta-hydroxyamino acids, producing glycine and aldehydes, via a retro-aldol mechanism. This is Serine hydroxymethyltransferase from Neisseria gonorrhoeae (strain ATCC 700825 / FA 1090).